We begin with the raw amino-acid sequence, 220 residues long: Iron-sulfur cluster repair protein YtfE (220 aa).

It belongs to the RIC family. YtfE subfamily. In terms of assembly, homodimer.

Its subcellular location is the cytoplasm. Di-iron-containing protein involved in the repair of iron-sulfur clusters damaged by oxidative and nitrosative stress conditions. The protein is Iron-sulfur cluster repair protein YtfE of Citrobacter koseri (strain ATCC BAA-895 / CDC 4225-83 / SGSC4696).